The sequence spans 172 residues: Ribosome maturation factor RimM (172 aa).

Residues 96-168 enclose the PRC barrel domain; that stretch reads EGEFYYHQII…RVDVELMEGL (73 aa).

This sequence belongs to the RimM family. In terms of assembly, binds ribosomal protein uS19.

Its subcellular location is the cytoplasm. Its function is as follows. An accessory protein needed during the final step in the assembly of 30S ribosomal subunit, possibly for assembly of the head region. Essential for efficient processing of 16S rRNA. May be needed both before and after RbfA during the maturation of 16S rRNA. It has affinity for free ribosomal 30S subunits but not for 70S ribosomes. This is Ribosome maturation factor RimM from Streptococcus pyogenes serotype M28 (strain MGAS6180).